A 573-amino-acid chain; its full sequence is Squalene monooxygenase (573 aa).

Topologically, residues 1–19 (MWTFLGIATFTYFYKKCGD) are cytoplasmic. The interval 1 to 99 (MWTFLGIATF…EQLESKRRRK (99 aa)) is interaction with MARCHF6. Residues 20–40 (VTLANKELLLCVLVFLSLGLV) lie within the membrane without spanning it. Residues 41-573 (LSYRCRHRNG…IYSEMKYLVH (533 aa)) lie on the Cytoplasmic side of the membrane. The segment at 61-72 (QFAAFSDILSAL) is required for degradation in response to high membrane cholesterol levels. A sufficient for catalytic activity region spans residues 100–573 (EVNLSETTLT…IYSEMKYLVH (474 aa)). FAD is bound by residues 132-133 (VL), 152-153 (ER), arginine 160, arginine 233, valine 249, aspartate 407, and methionine 420. Residues 515–573 (PLLLIRHFFSVAVYATYFCFKSEPWATKPRALFSSGAILYKACSIIFPLIYSEMKYLVH) form a hydrophobic; mediates interaction with membranes region.

It belongs to the squalene monooxygenase family. As to quaternary structure, interacts (via N-terminal domain) with MARCHF6. Interacts with SMIM22; this interaction modulates lipid droplet formation. Requires FAD as cofactor. Ubiquitinated by MARCHF6 in response to high cholesterol levels in intracellular membranes, leading to proteasomal degradation. In terms of tissue distribution, detected in lever (at protein level).

It localises to the microsome membrane. The protein resides in the endoplasmic reticulum membrane. It carries out the reaction squalene + reduced [NADPH--hemoprotein reductase] + O2 = (S)-2,3-epoxysqualene + oxidized [NADPH--hemoprotein reductase] + H2O + H(+). Its pathway is terpene metabolism; lanosterol biosynthesis; lanosterol from farnesyl diphosphate: step 2/3. Inhibited by NB-598 ((E)N-ethyl-N-(6,6-dimethyl-2-hepten-4-ynyl)-3-[(3,3'-bi-thiophen-5-yl)methoxy]benzene-methanamine). Contrary to fungal enzymes, the mammalian enzyme is only slightly inhibited by terbinafine. Catalyzes the stereospecific oxidation of squalene to (S)-2,3-epoxysqualene, and is considered to be a rate-limiting enzyme in steroid biosynthesis. The sequence is that of Squalene monooxygenase (Sqle) from Rattus norvegicus (Rat).